The chain runs to 102 residues: DNA/RNA-binding protein Alba 2 (102 aa).

R10, R13, R40, R42, N43, R46, and R86 together coordinate DNA.

It belongs to the histone-like Alba family. In terms of assembly, forms homodimers and homotetramers; oligomerization is enhanced and stabilized by DNA. Interacts with Alba 1.

It is found in the cytoplasm. The protein resides in the chromosome. Its function is as follows. Binds double-stranded DNA tightly but without sequence specificity. Involved in DNA compaction. The sequence is that of DNA/RNA-binding protein Alba 2 from Aeropyrum pernix (strain ATCC 700893 / DSM 11879 / JCM 9820 / NBRC 100138 / K1).